Consider the following 164-residue polypeptide: C-type natriuretic peptide (164 aa).

Residues 1-23 (MVASRLAAGGLLLLALLALALDG) form the signal peptide. Disordered stretches follow at residues 24–93 (KPAP…AAAA) and 115–134 (HPEH…GASR). Residues 24 to 142 (KPAPPQPLRK…SRRLKGVAKK (119 aa)) constitute a propeptide that is removed on maturation. Gly residues predominate over residues 58–67 (AGGGGGGGRS). Positions 68-93 (GSKAANAAPTAPKSKGGAAAAAAAAA) are enriched in low complexity. The segment covering 121 to 132 (GGGGGGGGGGGA) has biased composition (gly residues). Residues cysteine 148 and cysteine 164 are joined by a disulfide bond.

Belongs to the natriuretic peptide family. Expressed by the venom gland.

It is found in the secreted. In terms of biological role, snake venom natriuretic peptide that has a vasorelaxant activity in rat aortic strips and a diuretic potency in anesthetized rats. May act by activating natriuretic receptors (NPR1 and/or NPR2). The protein is C-type natriuretic peptide of Philodryas olfersii (Green snake).